The following is a 236-amino-acid chain: Alpha-acetolactate decarboxylase (236 aa).

This sequence belongs to the alpha-acetolactate decarboxylase family.

It carries out the reaction (2S)-2-acetolactate + H(+) = (R)-acetoin + CO2. It functions in the pathway polyol metabolism; (R,R)-butane-2,3-diol biosynthesis; (R,R)-butane-2,3-diol from pyruvate: step 2/3. Its function is as follows. Converts acetolactate into acetoin. This Lactococcus lactis subsp. cremoris (strain MG1363) protein is Alpha-acetolactate decarboxylase (aldB).